Consider the following 419-residue polypeptide: Tryptophan synthase beta chain (419 aa).

Lys-98 is modified (N6-(pyridoxal phosphate)lysine).

The protein belongs to the TrpB family. Tetramer of two alpha and two beta chains. Pyridoxal 5'-phosphate serves as cofactor.

The catalysed reaction is (1S,2R)-1-C-(indol-3-yl)glycerol 3-phosphate + L-serine = D-glyceraldehyde 3-phosphate + L-tryptophan + H2O. It participates in amino-acid biosynthesis; L-tryptophan biosynthesis; L-tryptophan from chorismate: step 5/5. In terms of biological role, the beta subunit is responsible for the synthesis of L-tryptophan from indole and L-serine. The sequence is that of Tryptophan synthase beta chain from Ruegeria sp. (strain TM1040) (Silicibacter sp.).